The primary structure comprises 160 residues: Transcriptional repressor NrdR (160 aa).

The segment at 3 to 34 (CPYCQYEDTQVKDSRPSEEGTVIRRRRICSVC) is a zinc-finger region. In terms of domain architecture, ATP-cone spans 49–139 (LLVLKKSGRY…VYRDFRNASD (91 aa)).

It belongs to the NrdR family. Zn(2+) is required as a cofactor.

In terms of biological role, negatively regulates transcription of bacterial ribonucleotide reductase nrd genes and operons by binding to NrdR-boxes. This Bartonella henselae (strain ATCC 49882 / DSM 28221 / CCUG 30454 / Houston 1) (Rochalimaea henselae) protein is Transcriptional repressor NrdR.